A 203-amino-acid chain; its full sequence is Peptidyl-tRNA hydrolase (203 aa).

Tyr-18 contacts tRNA. The Proton acceptor role is filled by His-23. TRNA-binding residues include Tyr-69, Asn-71, and Asn-117.

It belongs to the PTH family. In terms of assembly, monomer.

It is found in the cytoplasm. The catalysed reaction is an N-acyl-L-alpha-aminoacyl-tRNA + H2O = an N-acyl-L-amino acid + a tRNA + H(+). Its function is as follows. Hydrolyzes ribosome-free peptidyl-tRNAs (with 1 or more amino acids incorporated), which drop off the ribosome during protein synthesis, or as a result of ribosome stalling. Functionally, catalyzes the release of premature peptidyl moieties from peptidyl-tRNA molecules trapped in stalled 50S ribosomal subunits, and thus maintains levels of free tRNAs and 50S ribosomes. The polypeptide is Peptidyl-tRNA hydrolase (Parasynechococcus marenigrum (strain WH8102)).